The primary structure comprises 146 residues: Large ribosomal subunit protein uL15 (146 aa).

A disordered region spans residues 1–58 (MRLHELHPAPGSRPRATRVGRGIGSGLGKTSGRGHKGQKARSGGGVRRGFEGGQMPLT). Residues 21–31 (RGIGSGLGKTS) are compositionally biased toward gly residues.

It belongs to the universal ribosomal protein uL15 family. As to quaternary structure, part of the 50S ribosomal subunit.

In terms of biological role, binds to the 23S rRNA. The chain is Large ribosomal subunit protein uL15 from Moorella thermoacetica (strain ATCC 39073 / JCM 9320).